The following is a 164-amino-acid chain: UPF0304 protein Ent638_2838 (164 aa).

Belongs to the UPF0304 family.

In Enterobacter sp. (strain 638), this protein is UPF0304 protein Ent638_2838.